Here is a 379-residue protein sequence, read N- to C-terminus: Putative acetyl-CoA C-acetyltransferase VraB (379 aa).

Cys86 functions as the Acyl-thioester intermediate in the catalytic mechanism. His338 functions as the Proton acceptor in the catalytic mechanism.

It belongs to the thiolase-like superfamily. Thiolase family.

This is Putative acetyl-CoA C-acetyltransferase VraB (vraB) from Staphylococcus aureus (strain Mu3 / ATCC 700698).